A 310-amino-acid polypeptide reads, in one-letter code: MKGLVIKNTGSWYLVKTEDGRTIECKIKGNFRLKGIRSTNPIAVGDYVQIIINNEGTAFISEIEDRKNYIIRRASNLSKQSHILAANLDQCMLIVTINYPETSTIFIDRFLATAEAYRVPVKLIFNKTDRYNEDDTRYMDALINLYTYIGYPCFKVSALNNIGTDEVKKDLEGKVTLLSGNSGVGKSTLINAILPEQTLKTGEISDYHNKGMHTTTFSEMFPVDGGGYIIDTPGIKGFGTFDMEEEEVGHYFKEIFEYSAHCKYGNCTHRHEPGCAVRDAVEKHLISESRYTSYLNMLEDKEEGKYRAAY.

The region spanning 77-238 is the CP-type G domain; the sequence is LSKQSHILAA…IIDTPGIKGF (162 aa). GTP is bound by residues 126–129 and 180–188; these read NKTD and GNSGVGKST. Positions 262, 267, 269, and 275 each coordinate Zn(2+).

The protein belongs to the TRAFAC class YlqF/YawG GTPase family. RsgA subfamily. Monomer. Associates with 30S ribosomal subunit, binds 16S rRNA. Requires Zn(2+) as cofactor.

It is found in the cytoplasm. In terms of biological role, one of several proteins that assist in the late maturation steps of the functional core of the 30S ribosomal subunit. Helps release RbfA from mature subunits. May play a role in the assembly of ribosomal proteins into the subunit. Circularly permuted GTPase that catalyzes slow GTP hydrolysis, GTPase activity is stimulated by the 30S ribosomal subunit. The chain is Small ribosomal subunit biogenesis GTPase RsgA from Phocaeicola vulgatus (strain ATCC 8482 / DSM 1447 / JCM 5826 / CCUG 4940 / NBRC 14291 / NCTC 11154) (Bacteroides vulgatus).